A 284-amino-acid polypeptide reads, in one-letter code: Small ribosomal subunit protein uS5y/uS5u/uS5v (284 aa).

A compositionally biased stretch (basic and acidic residues) spans 1 to 19; the sequence is MAERGGESGAERGGDRGDF. A disordered region spans residues 1 to 51; that stretch reads MAERGGESGAERGGDRGDFGRGFGGGRGGGRGRDRGPRGRGRRGGRASEET. Over residues 20-29 the composition is skewed to gly residues; that stretch reads GRGFGGGRGG. The S5 DRBM domain occupies 95–158; the sequence is LKDEVMKIMP…ILAKLSVVPV (64 aa).

The protein belongs to the universal ribosomal protein uS5 family.

This is Small ribosomal subunit protein uS5y/uS5u/uS5v (RPS2B) from Arabidopsis thaliana (Mouse-ear cress).